A 140-amino-acid polypeptide reads, in one-letter code: uncharacterized protein (140 aa).

It belongs to the peptidase S24 family.

This is an uncharacterized protein from Haemophilus influenzae (strain ATCC 51907 / DSM 11121 / KW20 / Rd).